The primary structure comprises 180 residues: UPF0102 protein Tery_0733 (180 aa).

This sequence belongs to the UPF0102 family.

The polypeptide is UPF0102 protein Tery_0733 (Trichodesmium erythraeum (strain IMS101)).